The following is a 177-amino-acid chain: ATP-dependent protease subunit HslV (177 aa).

Residue T2 is part of the active site. Na(+) contacts are provided by G157, C160, and T163.

It belongs to the peptidase T1B family. HslV subfamily. In terms of assembly, a double ring-shaped homohexamer of HslV is capped on each side by a ring-shaped HslU homohexamer. The assembly of the HslU/HslV complex is dependent on binding of ATP.

The protein localises to the cytoplasm. The catalysed reaction is ATP-dependent cleavage of peptide bonds with broad specificity.. With respect to regulation, allosterically activated by HslU binding. Protease subunit of a proteasome-like degradation complex believed to be a general protein degrading machinery. The sequence is that of ATP-dependent protease subunit HslV from Aeromonas salmonicida (strain A449).